Here is a 611-residue protein sequence, read N- to C-terminus: Protein Pixie (611 aa).

4Fe-4S ferredoxin-type domains are found at residues 15 to 45 and 54 to 83; these read RIAI…MGKL and KIAS…IINL. ABC transporter domains lie at 78 to 323 and 350 to 570; these read ITII…FLDG and IKRM…LELL. ATP is bound by residues 118–125 and 387–394; these read GQNGIGKS and GENGTGKT.

Belongs to the ABC transporter superfamily. ABCE family. Interacts with components of eIF3 complex, namely eIF3a, eIF3j, eIF3b, eIF3c and eIF3i. Associates with the 40S ribosome subunit in an ATP-dependent manner and independently from the presence of the eIF3 complex. Forms a complex with Git and Pak; the interaction with Pak may be mediated by pix/dPIX. Ubiquitinated by Cnot4. Ubiquitination mediates the recruitment of autophagy receptors to the mitochondrial outer membrane and initiates mitophagy. Expressed in early and late larval imaginal disks (at protein level).

It is found in the cytoplasm. In terms of biological role, plays a role in translation initiation and quality control of translation. Together with pelo and HBS1, is required for 48S complex formation from 80S ribosomes and dissociation of vacant 80S ribosomes. Stabilizes core components of eIF3 complex promoting their assembly into translation initiation-competent complexes. Together with pelo and HBS1, recognizes stalled ribosomes and promotes dissociation of elongation complexes assembled on non-stop mRNAs; this triggers endonucleolytic cleavage of the mRNA, a mechanism to release non-functional ribosomes and to degrade damaged mRNAs as part of the No-Go Decay (NGD) pathway. Plays a role in the regulation of mRNA turnover. Plays a role in quality control of translation of mitochondrial outer membrane-localized mRNA. As part of the Pink1-regulated signaling, ubiquitinated by Cnot4 upon mitochondria damage; this modification generates polyubiquitin signals that recruits autophagy receptors to the mitochondrial outer membrane to initiate mitophagy. Required in the wing disk for cell division and growth as well as cell survival. During muscle embryogenesis, required for the recruitment of Pak to muscle attachments in the embryo, hence may play a role in proper muscle morphogenesis and proper guidance and targeting of subsets of myotubes. This is Protein Pixie from Drosophila melanogaster (Fruit fly).